The sequence spans 180 residues: MATHYSANQYQSAFTPKQLHCWSIPKDFKQHPSTHDDYTQFIANERGHLLAGVPRSQKNPWGTFLGTWDLPTKIPPSKLSLTSRSAEASKRLTNWIQNSEELLHACNGLQPQISGKASGKTDPPRDSSQGQQDPPVEESNKQTPLYRGRSKAESNRSSHRSVSSEKGGITAGDKVLQAQS.

The interval 111–180 is disordered; it reads PQISGKASGK…AGDKVLQAQS (70 aa).

It belongs to the Flattop family.

The protein localises to the cytoplasm. It is found in the cytoskeleton. Its subcellular location is the cilium basal body. It localises to the cell projection. The protein resides in the cilium. The protein localises to the apical cell membrane. It is found in the cilium axoneme. Its function is as follows. Microtubule inner protein (MIP) part of the dynein-decorated doublet microtubules (DMTs) in cilia axoneme. Acts as a regulator of cilium basal body docking and positioning in mono- and multiciliated cells. Regulates basal body docking and cilia formation in multiciliated lung cells. Regulates kinocilium positioning and stereocilia bundle morphogenesis in the inner ear. The polypeptide is Protein Flattop (Xenopus laevis (African clawed frog)).